A 692-amino-acid polypeptide reads, in one-letter code: Elongation factor G (692 aa).

One can recognise a tr-type G domain in the interval 9–284; the sequence is HMVRNIGIAA…AVVDYLPAPD (276 aa). GTP is bound by residues 18–25, 82–86, and 136–139; these read AHIDAGKT, DTPGH, and NKMD.

This sequence belongs to the TRAFAC class translation factor GTPase superfamily. Classic translation factor GTPase family. EF-G/EF-2 subfamily.

Its subcellular location is the cytoplasm. Its function is as follows. Catalyzes the GTP-dependent ribosomal translocation step during translation elongation. During this step, the ribosome changes from the pre-translocational (PRE) to the post-translocational (POST) state as the newly formed A-site-bound peptidyl-tRNA and P-site-bound deacylated tRNA move to the P and E sites, respectively. Catalyzes the coordinated movement of the two tRNA molecules, the mRNA and conformational changes in the ribosome. This is Elongation factor G from Campylobacter curvus (strain 525.92).